We begin with the raw amino-acid sequence, 415 residues long: Metal tolerance protein 5 (415 aa).

Residues Met-1–Leu-124 are Cytoplasmic-facing. A helical membrane pass occupies residues Ala-125 to Val-145. Over Arg-146–Leu-150 the chain is Vacuolar. Residues Ala-151 to Phe-171 traverse the membrane as a helical segment. Residues Thr-172–Gln-192 are Cytoplasmic-facing. A helical transmembrane segment spans residues Pro-193 to Glu-213. Topologically, residues Ser-214–Glu-232 are vacuolar. Residues Lys-233–Cys-253 form a helical membrane-spanning segment. The Cytoplasmic segment spans residues Arg-254–His-268. The helical transmembrane segment at Phe-269 to Trp-291 threads the bilayer. Over Ile-292–Asp-293 the chain is Vacuolar. Residues Pro-294–Leu-313 form a helical membrane-spanning segment. Residues Glu-314–Lys-415 are Cytoplasmic-facing.

This sequence belongs to the cation diffusion facilitator (CDF) transporter (TC 2.A.4) family. SLC30A subfamily.

It localises to the vacuole membrane. Its function is as follows. Involved in sequestration of excess metal in the cytoplasm into vacuoles to maintain metal homeostasis. In Oryza sativa subsp. japonica (Rice), this protein is Metal tolerance protein 5 (MTP5).